The following is a 1605-amino-acid chain: MDIYDTQTLGVVVFGGFMVVSAIGIFLVSTFSMKETSYEEALANQRKEMAKTHHQKGEKKKKEKTVEKKGKTKKKEEKPNGKIPEHDLDPNVTIILKEPVRVSAVAVAPTSVHSSVGHTPIATVPAMPQEKLASSPKDRKKKEKKVAKVEPAVSSIVNSIQVLASKSAILEATPKEVPMVAVPPVGSKASSPATSSQGKKGQGAQNQAKKGEGAQNQGKKGEGAQNQAKKGEGAQNQAKKGEGAQNQGKKGEGAQNQAKKGEGGQNQAKKGEGAQNQGKKGEGAQNQGKKGEGAQNQAKKGEGAQNQAKKGEGAQNQGKKGEGAQNQSKKGEGAQNQAKKGEGGQNQAKKGEGAQNQAKKGEGAQNQAKKGEGVQNQAKKGVEGAQNQGKKGEANQNQAKKGEGGQNQTKKGEGPQNQGKKGEAAQKQDKKIEGAQNQGKKPEGTSNQGKKGEGAQNQGKKGEGAQNQSKKGEGAQNQAKKGEGGQNQAKKGEGAQNQAKKGEGAQNQAKKGEGVQNQAKKGVEGAQNQGKKGEANQNQAKKGEGGQNQTKKGEGPQNQGKKGEAAQKQDKKIEGAQNQGKKPEGTSNQGKKGEGAQNQGKKGEGAQNQGKKGEGAQNQGKKGEGAQNQGKKGEGAQNQGKKGEGAQNQGKKGEGAQNQGKKGEGPQNQAKKGEGAQNQGKKGEGAQNQGKKGEGAQNQGKKAEGVQSQSKKGEGTQNQGKKGDGNPNQGKKGEGASNQNRKTDTVANQGTKQEGVSNQVKKSEGSPNQGKKAEGAPNQGKKKDGSPSQAKKVDAAANQGKKSEMAPAQGQKASMVQSQEAPKQDAPAKKKSGSRKKGEPGPPDCDGPLFLPYKTLVSTVGSMVFSEGEAQRLIEILSEKTGVIQDTWHKATQKGDPVAILKRQLQEKEKLLATEQEDAAVAKSKLRELNKEMASEKAKAAAGEAKVKKQLVAREQEIAAVQARMQASYRDHVKEVQQLQGKIRTLQEQLENGPNTQLARLQQENSILRDALNQATSQVESKQNTELAKLRQELSKVNKELVEKSEASRQEEQQRKALEAKAATFEKQVLQLQASHKESEEALQKRLEEVTRELCRAQTSHANLRADAEKAQEQQQRVAELHSKLQSSEVEVKSKCEELSSLHGQLKEARAENSQLTERIRSIEALLEAGQAQDTQASHAEANQQQTRLKELESQVSCLEKETSELKEAMEQQKGKNNDLREKNWKAMEALALAERACEEKLRSLTQAKEESEKQLHLAEAQTKETLLALLPGLSISAHQNYAEWLQEFKEKGSELLKKPPTLEPSMDIVLKLREAEETQNSLQAECDQYRTILAETEGMLKDLQKSVEEEERVWKAKVGAAEEELHKSRVTVKHLEDIVEKLKGELESSDQVREHTSHLEAELEKHMAAASAECQNYAKEVAGLRQLLLESQSQLDEAKSEAQKQSDELALVRQQLSDMRSHVEDGDVAGSPAVPPAEQDPMKLKTQLERTEATLEAEQTRRQKLTAEFEEAQRTACRIQEELEKLRAAGPLESSGKEEITQLKERLEKEKRLTSDLGRAAIKLQELLKTTQEQLTKEKDTVKKLQEQLGKAEDGSSSKEGTSV.

Over 1–7 (MDIYDTQ) the chain is Lumenal. A helical transmembrane segment spans residues 8-28 (TLGVVVFGGFMVVSAIGIFLV). The Cytoplasmic portion of the chain corresponds to 29-1605 (STFSMKETSY…GSSSKEGTSV (1577 aa)). The segment at 44 to 88 (NQRKEMAKTHHQKGEKKKKEKTVEKKGKTKKKEEKPNGKIPEHDL) is disordered. A compositionally biased stretch (basic residues) spans 52 to 63 (THHQKGEKKKKE). The segment covering 64–88 (KTVEKKGKTKKKEEKPNGKIPEHDL) has biased composition (basic and acidic residues). Serine 111 is modified (phosphoserine). The interval 114 to 150 (SSVGHTPIATVPAMPQEKLASSPKDRKKKEKKVAKVE) is disordered. A Glycyl lysine isopeptide (Lys-Gly) (interchain with G-Cter in SUMO2) cross-link involves residue lysine 148. Residues serine 159 and serine 165 each carry the phosphoserine modification. Positions 172–849 (ATPKEVPMVA…PGPPDCDGPL (678 aa)) are disordered. Repeat copies occupy residues 196–205 (SQGKKGQGAQ), 206–215 (NQAKKGEGAQ), 216–225 (NQGKKGEGAQ), 226–235 (NQAKKGEGAQ), 236–245 (NQAKKGEGAQ), 246–255 (NQGKKGEGAQ), 256–265 (NQAKKGEGGQ), 266–275 (NQAKKGEGAQ), 276–285 (NQGKKGEGAQ), 286–295 (NQGKKGEGAQ), 296–305 (NQAKKGEGAQ), 306–315 (NQAKKGEGAQ), 316–325 (NQGKKGEGAQ), 326–335 (NQSKKGEGAQ), 336–345 (NQAKKGEGGQ), 346–355 (NQAKKGEGAQ), 356–365 (NQAKKGEGAQ), 366–375 (NQAKKGEGVQ), 376–385 (NQAKKGVEGA), 386–395 (QNQGKKGEAN), 396–405 (QNQAKKGEGG), 406–415 (QNQTKKGEGP), 416–425 (QNQGKKGEAA), 426–435 (QKQDKKIEGA), 436–445 (QNQGKKPEGT), 446–455 (SNQGKKGEGA), 456–465 (QNQGKKGEGA), 466–475 (QNQSKKGEGA), 476–485 (QNQAKKGEGG), 486–495 (QNQAKKGEGA), 496–505 (QNQAKKGEGA), 506–515 (QNQAKKGEGV), 516–525 (QNQAKKGVEG), 527–536 (QNQGKKGEAN), 537–546 (QNQAKKGEGG), 547–556 (QNQTKKGEGP), 557–566 (QNQGKKGEAA), 567–576 (QKQDKKIEGA), 577–586 (QNQGKKPEGT), 587–596 (SNQGKKGEGA), 597–606 (QNQGKKGEGA), 607–616 (QNQGKKGEGA), 617–626 (QNQGKKGEGA), 628–637 (NQGKKGEGAQ), 638–647 (NQGKKGEGAQ), 648–657 (NQGKKGEGAQ), 658–667 (NQGKKGEGPQ), 668–677 (NQAKKGEGAQ), 678–687 (NQGKKGEGAQ), 688–697 (NQGKKGEGAQ), 698–707 (NQGKKAEGVQ), 708–717 (SQSKKGEGTQ), 718–727 (NQGKKGDGNP), 729–738 (QGKKGEGASN), 739–748 (QNRKTDTVAN), 749–758 (QGTKQEGVSN), 759–768 (QVKKSEGSPN), 769–778 (QGKKAEGAPN), 779–788 (QGKKKDGSPS), 789–798 (QAKKVDAAAN), and 799–808 (QGKKSEMAPA). The tract at residues 196 to 808 (SQGKKGQGAQ…QGKKSEMAPA (613 aa)) is 61 X 10 AA tandem repeats of [NSQ]-[NKQVGA]-[GSAQKRT]-[ASGDTK]-[KGTQSAV]-[KGAED]-[EQVGIPTDMA]-[EGVAS]-[AGVPETNS]-[AQNGPTVS]. Residues 197–208 (QGKKGQGAQNQA) show a composition bias toward low complexity. 4 stretches are compositionally biased toward polar residues: residues 224 to 258 (AQNQ…QNQA), 274 to 338 (AQNQ…QNQA), 354 to 378 (AQNQ…QNQA), and 385 to 399 (AQNQ…QNQA). The segment covering 420 to 433 (KKGEAAQKQDKKIE) has biased composition (basic and acidic residues). 3 stretches are compositionally biased toward polar residues: residues 435 to 479 (AQNQ…QNQA), 495 to 519 (AQNQ…QNQA), and 526 to 540 (AQNQ…QNQA). Residues 561-574 (KKGEAAQKQDKKIE) are compositionally biased toward basic and acidic residues. Composition is skewed to polar residues over residues 576–720 (AQNQ…QNQG) and 736–769 (ASNQ…SPNQ). Serine 786 is subject to Phosphoserine. Over residues 811 to 821 (QKASMVQSQEA) the composition is skewed to polar residues. At serine 818 the chain carries Phosphoserine. A Glycyl lysine isopeptide (Lys-Gly) (interchain with G-Cter in SUMO1) cross-link involves residue lysine 823. An N6-acetyllysine modification is found at lysine 1135. Phosphoserine occurs at positions 1162 and 1178. 2 disordered regions span residues 1460 to 1481 (MRSH…AEQD) and 1571 to 1605 (TTQE…GTSV). Over residues 1576-1598 (LTKEKDTVKKLQEQLGKAEDGSS) the composition is skewed to basic and acidic residues.

Widely expressed.

The protein resides in the endoplasmic reticulum membrane. In terms of biological role, acts as a ribosome receptor and mediates interaction between the ribosome and the endoplasmic reticulum membrane. This is Ribosome-binding protein 1 (Rrbp1) from Mus musculus (Mouse).